A 743-amino-acid polypeptide reads, in one-letter code: Phosphoribosylformylglycinamidine synthase subunit PurL (743 aa).

The active site involves H50. The ATP site is built by Y53 and K92. A Mg(2+)-binding site is contributed by E94. Residues 95-98 and R117 contribute to the substrate site; that span reads SHNH. H96 serves as the catalytic Proton acceptor. D118 contributes to the Mg(2+) binding site. Q241 serves as a coordination point for substrate. D269 is a Mg(2+) binding site. 313 to 315 lines the substrate pocket; sequence ESQ. The ATP site is built by D495 and G532. N533 provides a ligand contact to Mg(2+). Residue S535 participates in substrate binding.

The protein belongs to the FGAMS family. Monomer. Part of the FGAM synthase complex composed of 1 PurL, 1 PurQ and 2 PurS subunits.

It is found in the cytoplasm. It carries out the reaction N(2)-formyl-N(1)-(5-phospho-beta-D-ribosyl)glycinamide + L-glutamine + ATP + H2O = 2-formamido-N(1)-(5-O-phospho-beta-D-ribosyl)acetamidine + L-glutamate + ADP + phosphate + H(+). Its pathway is purine metabolism; IMP biosynthesis via de novo pathway; 5-amino-1-(5-phospho-D-ribosyl)imidazole from N(2)-formyl-N(1)-(5-phospho-D-ribosyl)glycinamide: step 1/2. Its function is as follows. Part of the phosphoribosylformylglycinamidine synthase complex involved in the purines biosynthetic pathway. Catalyzes the ATP-dependent conversion of formylglycinamide ribonucleotide (FGAR) and glutamine to yield formylglycinamidine ribonucleotide (FGAM) and glutamate. The FGAM synthase complex is composed of three subunits. PurQ produces an ammonia molecule by converting glutamine to glutamate. PurL transfers the ammonia molecule to FGAR to form FGAM in an ATP-dependent manner. PurS interacts with PurQ and PurL and is thought to assist in the transfer of the ammonia molecule from PurQ to PurL. This Rhizobium leguminosarum bv. trifolii (strain WSM2304) protein is Phosphoribosylformylglycinamidine synthase subunit PurL.